A 110-amino-acid polypeptide reads, in one-letter code: Small ribosomal subunit protein bS16 (110 aa).

The interval 79-110 is disordered; sequence AAGVKKREARNNPQKAVPRKERKAQAEAAAKG.

Belongs to the bacterial ribosomal protein bS16 family.

This chain is Small ribosomal subunit protein bS16, found in Bradyrhizobium diazoefficiens (strain JCM 10833 / BCRC 13528 / IAM 13628 / NBRC 14792 / USDA 110).